A 248-amino-acid chain; its full sequence is MSDGKEELVNRAKLAEQAERYDDMAASMKKVTELGAELSNEERNLLSVAYKNVVGARRSSWRVISSIEQKTEGSEKKQQMAKEYREKVEKELRDICQDVLNLLDKFLIPKAGAAESKVFYLKMKGDYYRYLAEVASGDDRNSVVEKSQQSYQEAFDIAKDKMQPTHPIRLGLALNFSVFFYEILNAPDKACQLAKQAFDDAIAELDTLNEDSYKDSTLIMQLLRDNLTLWTSDAATDDTDANETEGGN.

This sequence belongs to the 14-3-3 family. In terms of assembly, interacts with daf-16. Interacts with sir-2.1. Interacts with hcf-1.

The protein localises to the cytoplasm. It localises to the nucleus. In terms of biological role, required for extension of lifespan by sir-2.1. Required to modulate lifespan, in concert with hcf-1, acting redundantly with 14-3-3-like protein par-5. Promotes nuclear export of yap-1. Negatively regulates the transcriptional activity of daf-16 by sequestering it to the cytoplasm. In Caenorhabditis elegans, this protein is 14-3-3-like protein 2.